We begin with the raw amino-acid sequence, 382 residues long: Mannitol-1-phosphate 5-dehydrogenase (382 aa).

Alanine 3–glycine 14 is a binding site for NAD(+).

Belongs to the mannitol dehydrogenase family.

The enzyme catalyses D-mannitol 1-phosphate + NAD(+) = beta-D-fructose 6-phosphate + NADH + H(+). The protein is Mannitol-1-phosphate 5-dehydrogenase of Salmonella agona (strain SL483).